Reading from the N-terminus, the 301-residue chain is uncharacterized protein (301 aa).

Belongs to the asfivirus E301R family. In terms of assembly, interacts with host IRF3.

Its function is as follows. Plays a role in the inhibition of host innate immune system by acting as a negatively regulator of type I interferon production. Mechanistically, interacts with and prevents host IRF3 nuclear localization to inhibit its transcriptional activity. This is an uncharacterized protein from African swine fever virus (isolate Pig/Kenya/KEN-50/1950) (ASFV).